The primary structure comprises 132 residues: MDLRTGVPITAAQAANGVFIWELRNPLYFKIRLVETPMYTRSRVFHIQVRANHNMRTALGLHKAYFNFQVWTTLTTISGQIYLNRFKLLVMFYLDNLGLISVNNVIRAVSFATDKRYVNAVLENHEIIYKLY.

The protein belongs to the geminiviridae replication enhancer protein family. Homooligomer. Interacts with the replication-associated protein (REP). Interacts with host proliferating cell nuclear antigen (PCNA). Interacts with host retinoblastoma-related protein 1 (RBR1), and may thereby deregulate the host cell cycle. Oligomerization and interaction with PCNA are necessary for optimal replication enhancement.

Increases viral DNA accumulation. Enhances infectivity and symptom expression. This is Replication enhancer protein from Pepper huasteco yellow vein virus (PHYVV).